Consider the following 139-residue polypeptide: ATP synthase epsilon chain (139 aa).

It belongs to the ATPase epsilon chain family. F-type ATPases have 2 components, CF(1) - the catalytic core - and CF(0) - the membrane proton channel. CF(1) has five subunits: alpha(3), beta(3), gamma(1), delta(1), epsilon(1). CF(0) has three main subunits: a, b and c.

The protein localises to the cell inner membrane. In terms of biological role, produces ATP from ADP in the presence of a proton gradient across the membrane. In Escherichia coli O139:H28 (strain E24377A / ETEC), this protein is ATP synthase epsilon chain.